A 158-amino-acid chain; its full sequence is Cyclic pyranopterin monophosphate synthase (158 aa).

Residues 75–77 (LCH) and 111–112 (ME) contribute to the substrate site. The active site involves Asp126.

Belongs to the MoaC family. Homohexamer; trimer of dimers.

It catalyses the reaction (8S)-3',8-cyclo-7,8-dihydroguanosine 5'-triphosphate = cyclic pyranopterin phosphate + diphosphate. It functions in the pathway cofactor biosynthesis; molybdopterin biosynthesis. In terms of biological role, catalyzes the conversion of (8S)-3',8-cyclo-7,8-dihydroguanosine 5'-triphosphate to cyclic pyranopterin monophosphate (cPMP). This chain is Cyclic pyranopterin monophosphate synthase, found in Caulobacter vibrioides (strain ATCC 19089 / CIP 103742 / CB 15) (Caulobacter crescentus).